The chain runs to 906 residues: Protein translocase subunit SecA (906 aa).

ATP contacts are provided by residues Gln89, 107–111 (GEGKT), and Asp502. The disordered stretch occupies residues 868 to 887 (VPPAQRDPADPRTWGKVSRN). Zn(2+) is bound by residues Cys890, Cys892, Cys901, and His902.

The protein belongs to the SecA family. Monomer and homodimer. Part of the essential Sec protein translocation apparatus which comprises SecA, SecYEG and auxiliary proteins SecDF-YajC and YidC. Requires Zn(2+) as cofactor.

Its subcellular location is the cell inner membrane. The protein localises to the cytoplasm. The catalysed reaction is ATP + H2O + cellular proteinSide 1 = ADP + phosphate + cellular proteinSide 2.. Its function is as follows. Part of the Sec protein translocase complex. Interacts with the SecYEG preprotein conducting channel. Has a central role in coupling the hydrolysis of ATP to the transfer of proteins into and across the cell membrane, serving both as a receptor for the preprotein-SecB complex and as an ATP-driven molecular motor driving the stepwise translocation of polypeptide chains across the membrane. This Brucella melitensis biotype 1 (strain ATCC 23456 / CCUG 17765 / NCTC 10094 / 16M) protein is Protein translocase subunit SecA.